Reading from the N-terminus, the 206-residue chain is Endoribonuclease YbeY (206 aa).

The segment at 1-20 (MSQANHNDTHNNIDDNINNH) is disordered. Zn(2+) contacts are provided by His-168, His-172, and His-178.

The protein belongs to the endoribonuclease YbeY family. Zn(2+) serves as cofactor.

Its subcellular location is the cytoplasm. Its function is as follows. Single strand-specific metallo-endoribonuclease involved in late-stage 70S ribosome quality control and in maturation of the 3' terminus of the 16S rRNA. This Psychrobacter arcticus (strain DSM 17307 / VKM B-2377 / 273-4) protein is Endoribonuclease YbeY.